The chain runs to 302 residues: tRNA pseudouridine synthase B (302 aa).

Residue Asp-38 is the Nucleophile of the active site.

This sequence belongs to the pseudouridine synthase TruB family. Type 1 subfamily.

It carries out the reaction uridine(55) in tRNA = pseudouridine(55) in tRNA. In terms of biological role, responsible for synthesis of pseudouridine from uracil-55 in the psi GC loop of transfer RNAs. In Geobacillus thermodenitrificans (strain NG80-2), this protein is tRNA pseudouridine synthase B.